Here is a 347-residue protein sequence, read N- to C-terminus: uncharacterized protein (347 aa).

This is an uncharacterized protein from Magallana gigas (Pacific oyster).